The sequence spans 112 residues: Putative movement protein (112 aa).

The helical transmembrane segment at 27 to 47 (IGIIMLCIVGIVVLWVLIILC) threads the bilayer. The disordered stretch occupies residues 77–112 (TGTPFEETGPHRERRWAERRTEATNQNNNDNVNRFS). Positions 84–98 (TGPHRERRWAERRTE) are enriched in basic and acidic residues. Positions 101–112 (NQNNNDNVNRFS) are enriched in polar residues.

This sequence belongs to the nanovirus movement protein family.

The protein localises to the host cell membrane. Functionally, may transport viral genome to neighboring plant cells directly through plasmosdesmata, without any budding. The movement protein allows efficient cell to cell propagation, by bypassing the host cell wall barrier. The chain is Putative movement protein (DNA-M) from Subterranean clover stunt virus (strain F) (SCSV).